Consider the following 470-residue polypeptide: Neuraminidase (470 aa).

Over 1 to 14 (MNPNQKIITIGSIS) the chain is Intravirion. The tract at residues 11–32 (GSISLGLVVFNVLLHVVSIIVT) is involved in apical transport and lipid raft association. A helical transmembrane segment spans residues 15-35 (LGLVVFNVLLHVVSIIVTVLV). Residues 32-86 (TVLVLGKGGNNGICNETVVREYNETVRIEKVTQWHNTNVVEYVPYWNGGTYMNNT) form a hypervariable stalk region region. Residues 36–470 (LGKGGNNGIC…AILPFDIDKM (435 aa)) are Virion surface-facing. N-linked (GlcNAc...) asparagine; by host glycans are attached at residues Asn46, Asn54, and Asn84. A head of neuraminidase region spans residues 89 to 470 (ICDAKGFAPF…AILPFDIDKM (382 aa)). 8 disulfides stabilise this stretch: Cys90–Cys417, Cys122–Cys127, Cys182–Cys229, Cys231–Cys236, Cys277–Cys290, Cys279–Cys288, Cys316–Cys335, and Cys421–Cys446. Arg116 is a substrate binding site. An N-linked (GlcNAc...) asparagine; by host glycan is attached at Asn144. Catalysis depends on Asp149, which acts as the Proton donor/acceptor. Arg150 lines the substrate pocket. 275-276 (EE) contributes to the substrate binding site. Arg291 contributes to the substrate binding site. Asp292, Gly296, and Asp322 together coordinate Ca(2+). Arg368 provides a ligand contact to substrate. The N-linked (GlcNAc...) asparagine; by host glycan is linked to Asn398. Tyr402 serves as the catalytic Nucleophile.

The protein belongs to the glycosyl hydrolase 34 family. In terms of assembly, homotetramer. It depends on Ca(2+) as a cofactor. Post-translationally, N-glycosylated.

The protein resides in the virion membrane. Its subcellular location is the host apical cell membrane. It carries out the reaction Hydrolysis of alpha-(2-&gt;3)-, alpha-(2-&gt;6)-, alpha-(2-&gt;8)- glycosidic linkages of terminal sialic acid residues in oligosaccharides, glycoproteins, glycolipids, colominic acid and synthetic substrates.. Its activity is regulated as follows. Inhibited by the neuraminidase inhibitors zanamivir (Relenza) and oseltamivir (Tamiflu). These drugs interfere with the release of progeny virus from infected cells and are effective against all influenza strains. Resistance to neuraminidase inhibitors is quite rare. In terms of biological role, catalyzes the removal of terminal sialic acid residues from viral and cellular glycoconjugates. Cleaves off the terminal sialic acids on the glycosylated HA during virus budding to facilitate virus release. Additionally helps virus spread through the circulation by further removing sialic acids from the cell surface. These cleavages prevent self-aggregation and ensure the efficient spread of the progeny virus from cell to cell. Otherwise, infection would be limited to one round of replication. Described as a receptor-destroying enzyme because it cleaves a terminal sialic acid from the cellular receptors. May facilitate viral invasion of the upper airways by cleaving the sialic acid moieties on the mucin of the airway epithelial cells. Likely to plays a role in the budding process through its association with lipid rafts during intracellular transport. May additionally display a raft-association independent effect on budding. Plays a role in the determination of host range restriction on replication and virulence. Sialidase activity in late endosome/lysosome traffic seems to enhance virus replication. The chain is Neuraminidase from Influenza A virus (strain A/Duck/Ukraine/1/1963 H3N8).